The following is a 423-amino-acid chain: Putative competence-damage inducible protein (423 aa).

This sequence belongs to the CinA family.

In Streptococcus pyogenes serotype M4 (strain MGAS10750), this protein is Putative competence-damage inducible protein.